A 69-amino-acid chain; its full sequence is Disintegrin VLO5B (69 aa).

The Disintegrin domain occupies M1–E66. Disulfide bonds link C7–C30, C21–C27, C26–C51, and C39–C58. The Cell attachment site; atypical (MLD) signature appears at M43–D45.

This sequence belongs to the disintegrin family. Dimeric disintegrin subfamily. As to quaternary structure, heterodimer with VLO5A; disulfide-linked. In terms of tissue distribution, expressed by the venom gland.

Its subcellular location is the secreted. Its function is as follows. Poor inhibitor of platelet aggregation. The disintegrin inhibits the adhesion of the alpha-4/beta-1 (ITGA4/ITGB1) integrin to VCAM-1. Inhibition on alpha-2b/beta-3 (ITGA2B/ITGB3) is low. The chain is Disintegrin VLO5B from Macrovipera lebetina obtusa (Levant blunt-nosed viper).